Consider the following 436-residue polypeptide: GTPase Der (436 aa).

2 consecutive EngA-type G domains span residues 4–167 and 175–351; these read PVIA…PTDL and IKFS…ENQN. Residues 10–17, 57–61, 119–122, 181–188, 229–233, and 294–297 contribute to the GTP site; these read GRPNVGKS, DTGGI, NKAD, DTAGI, and NKWD. Positions 352 to 436 constitute a KH-like domain; it reads RRIQSALLND…PIHLIPRQRK (85 aa).

This sequence belongs to the TRAFAC class TrmE-Era-EngA-EngB-Septin-like GTPase superfamily. EngA (Der) GTPase family. In terms of assembly, associates with the 50S ribosomal subunit.

Functionally, GTPase that plays an essential role in the late steps of ribosome biogenesis. The protein is GTPase Der of Latilactobacillus sakei subsp. sakei (strain 23K) (Lactobacillus sakei subsp. sakei).